A 427-amino-acid polypeptide reads, in one-letter code: 3-phosphoshikimate 1-carboxyvinyltransferase (427 aa).

3-phosphoshikimate-binding residues include Lys20, Ser21, and Arg25. A phosphoenolpyruvate-binding site is contributed by Lys20. Phosphoenolpyruvate-binding residues include Gly92 and Arg120. Ser166, Gln168, Asp312, and Lys339 together coordinate 3-phosphoshikimate. Gln168 contacts phosphoenolpyruvate. Catalysis depends on Asp312, which acts as the Proton acceptor. The phosphoenolpyruvate site is built by Arg343 and Arg385.

It belongs to the EPSP synthase family. In terms of assembly, monomer.

The protein localises to the cytoplasm. The catalysed reaction is 3-phosphoshikimate + phosphoenolpyruvate = 5-O-(1-carboxyvinyl)-3-phosphoshikimate + phosphate. It functions in the pathway metabolic intermediate biosynthesis; chorismate biosynthesis; chorismate from D-erythrose 4-phosphate and phosphoenolpyruvate: step 6/7. Its function is as follows. Catalyzes the transfer of the enolpyruvyl moiety of phosphoenolpyruvate (PEP) to the 5-hydroxyl of shikimate-3-phosphate (S3P) to produce enolpyruvyl shikimate-3-phosphate and inorganic phosphate. The protein is 3-phosphoshikimate 1-carboxyvinyltransferase of Streptococcus agalactiae serotype III (strain NEM316).